A 63-amino-acid polypeptide reads, in one-letter code: SPbeta prophage-derived uncharacterized protein YomP (63 aa).

The chain is SPbeta prophage-derived uncharacterized protein YomP (yomP) from Bacillus subtilis (strain 168).